The following is a 1770-amino-acid chain: Probable outer membrane protein PmpC (1770 aa).

The first 20 residues, 1–20 (MKFMSATAVFAAALSSVTEA), serve as a signal peptide directing secretion. Disordered regions lie at residues 73–109 (LPRKHLSSSSEASPTTEGVSSSSSGETDEKTEEELDN), 264–311 (EDTL…GKGG), 481–505 (PAAPSLTEAESDQTDQTETSDTNSD), 611–818 (ESTP…STTE), and 1271–1329 (LRII…TSRT). Positions 85 to 97 (SPTTEGVSSSSSG) are enriched in low complexity. Residues 268-285 (DSTPETEQTESNGNQDGS) are compositionally biased toward polar residues. Low complexity-rich tracts occupy residues 294-303 (SESPESTPSP) and 496-505 (QTETSDTNSD). 2 stretches are compositionally biased toward polar residues: residues 631-675 (TEDP…TGNA) and 682-703 (QDSTQSNEENTLPNSNIDQSNE). 2 stretches are compositionally biased toward low complexity: residues 719–748 (ESVSSSSESGSSTPQDGGAASSGAPSGDQS) and 762–802 (STDS…GDSA). Residues 1303 to 1319 (NNDASNQGESANGSSSP) show a composition bias toward polar residues. The Autotransporter domain occupies 1477-1770 (EEVSYNNLWI…MMNCGARMTF (294 aa)).

This sequence belongs to the PMP outer membrane protein family.

It is found in the secreted. The protein resides in the cell wall. Its subcellular location is the cell outer membrane. This Chlamydia trachomatis serovar D (strain ATCC VR-885 / DSM 19411 / UW-3/Cx) protein is Probable outer membrane protein PmpC (pmpC).